The primary structure comprises 293 residues: MFVSLWEFFYGHFFRFWMKWLLRQMTGKCELQRIFDTYGGAQRTYRIENSLTYSKNKVLQNATRVAQSELDRCIANIMKEKNICSEKDTSFQICMRTCLLQITGYKQLYHDVENVRKKPYDSANAQHEKMLLKLWSLLMPTKKLTARISKQWADIGFQGDDPKTDFRGMGILGLINLVYFSENYTSEAHQILSRSNHPKLGYSYAIVGINLTEMAYSLLKSEALKLHLYNFVPGVPTMEHFHQFYCYLVYEFDKFWLEEEPESIMYFNLYREKFHERIKGLLMDCNAVLTLKT.

The ELMO domain maps to Gln-126–Leu-282.

Its function is as follows. Acts as a GTPase-activating protein (GAP) toward guanine nucleotide exchange factors like ARL2, ARL3, ARF1 and ARF6, but not for GTPases outside the Arf family. The polypeptide is ELMO domain-containing protein 2 (Elmod2) (Mus musculus (Mouse)).